Consider the following 392-residue polypeptide: Tryptophan synthase beta chain (392 aa).

The residue at position 84 (lysine 84) is an N6-(pyridoxal phosphate)lysine.

Belongs to the TrpB family. As to quaternary structure, tetramer of two alpha and two beta chains. The cofactor is pyridoxal 5'-phosphate.

The enzyme catalyses (1S,2R)-1-C-(indol-3-yl)glycerol 3-phosphate + L-serine = D-glyceraldehyde 3-phosphate + L-tryptophan + H2O. Its pathway is amino-acid biosynthesis; L-tryptophan biosynthesis; L-tryptophan from chorismate: step 5/5. In terms of biological role, the beta subunit is responsible for the synthesis of L-tryptophan from indole and L-serine. In Campylobacter jejuni subsp. jejuni serotype O:6 (strain 81116 / NCTC 11828), this protein is Tryptophan synthase beta chain.